The sequence spans 208 residues: Fibroblast growth factor 10 (208 aa).

The signal sequence occupies residues 1–37 (MWKWILTHCASAFPHLPGCCCCCFLLLFLVSSVPVTC). N-linked (GlcNAc...) asparagine glycosylation is found at Asn-51 and Asn-196.

Belongs to the heparin-binding growth factors family. Interacts with FGFR1 and FGFR2. Interacts with FGFBP1.

It is found in the secreted. Functionally, plays an important role in the regulation of embryonic development, cell proliferation and cell differentiation. Required for normal branching morphogenesis. May play a role in wound healing. The protein is Fibroblast growth factor 10 (FGF10) of Homo sapiens (Human).